A 598-amino-acid polypeptide reads, in one-letter code: MLRTHAAGSLRPADAGQTVTLAGWVARRRDHGGVIFIDLRDASGVSQVVFREGDVLAAAHRLRAEFCVAVTGVVEVRPEGNENPEIPTGQIEVNATELTVLGESAPLPFQLDEQAGEEARLKYRYLDLRREGPGNALRLRSKVNAAARSVLAEHDFVEIETPTLTRSTPEGARDFLVPARLQPGSFYALPQSPQLFKQLLMVAGMERYYQIARCYRDEDFRADRQPEFTQLDMEMSFVEADDVIAISEQVLKAVWATIGYDLPLPLPRISYEEAMRRFGSDKPDLRFGIELVECTEYFKDTTFRVFQAPYVGAVVMPGGASQPRRTLDGWQEFAKQRGHKGLAYVLVGEDGTLGGPVAKNLSDAERDGLVAHVGANPGDCIFFAAGPAKGARALLGATRIEIAKRLDLIDPNAWAFTWVVDFPMFEAADEATAAGDVAVGSGAWTAMHHAFTAPKPDSVDTFDSDPGNALSDAYDIVCNGNEIGGGSIRIHRRDIQERVFAMMGIDHDEAQEKFGFLLDAFSYGAPPHGGIAFGWDRITALLAGVDSIREVIAFPKSGGGVDPLTDAPAPITPQQRKESGIDAKPREDKPKEDAKSKA.

Glu-170 contacts L-aspartate. Residues 194-197 are aspartate; that stretch reads QLFK. Arg-216 is a binding site for L-aspartate. ATP is bound by residues 216-218 and Gln-225; that span reads RDE. His-448 provides a ligand contact to L-aspartate. Residue Glu-482 coordinates ATP. L-aspartate is bound at residue Arg-489. ATP is bound at residue 534–537; the sequence is GWDR. The tract at residues 558–598 is disordered; the sequence is GGGVDPLTDAPAPITPQQRKESGIDAKPREDKPKEDAKSKA. A compositionally biased stretch (basic and acidic residues) spans 575–598; the sequence is QRKESGIDAKPREDKPKEDAKSKA.

The protein belongs to the class-II aminoacyl-tRNA synthetase family. Type 1 subfamily. Homodimer.

It localises to the cytoplasm. The catalysed reaction is tRNA(Asx) + L-aspartate + ATP = L-aspartyl-tRNA(Asx) + AMP + diphosphate. Aspartyl-tRNA synthetase with relaxed tRNA specificity since it is able to aspartylate not only its cognate tRNA(Asp) but also tRNA(Asn). Reaction proceeds in two steps: L-aspartate is first activated by ATP to form Asp-AMP and then transferred to the acceptor end of tRNA(Asp/Asn). The sequence is that of Aspartate--tRNA(Asp/Asn) ligase from Mycolicibacterium smegmatis (strain ATCC 700084 / mc(2)155) (Mycobacterium smegmatis).